We begin with the raw amino-acid sequence, 537 residues long: uncharacterized protein (537 aa).

The protein belongs to the RuBisCO large chain family. Type IV subfamily.

Functionally, unknown. Probably does not have RuBisCO activity. This is an uncharacterized protein from Symbiodinium sp. (Dinoflagellate).